The following is a 478-amino-acid chain: Histidine--tRNA ligase (478 aa).

It belongs to the class-II aminoacyl-tRNA synthetase family. In terms of assembly, homodimer.

It is found in the cytoplasm. The enzyme catalyses tRNA(His) + L-histidine + ATP = L-histidyl-tRNA(His) + AMP + diphosphate + H(+). This is Histidine--tRNA ligase (hisS) from Xanthomonas axonopodis pv. citri (strain 306).